The following is a 222-amino-acid chain: Probable RNA 2'-phosphotransferase (222 aa).

This sequence belongs to the KptA/TPT1 family.

Functionally, removes the 2'-phosphate from RNA via an intermediate in which the phosphate is ADP-ribosylated by NAD followed by a presumed transesterification to release the RNA and generate ADP-ribose 1''-2''-cyclic phosphate (APPR&gt;P). May function as an ADP-ribosylase. This Haloarcula marismortui (strain ATCC 43049 / DSM 3752 / JCM 8966 / VKM B-1809) (Halobacterium marismortui) protein is Probable RNA 2'-phosphotransferase.